A 270-amino-acid chain; its full sequence is MAGLEVLFASAAPAITCAQDALVCFLHWEVVTHGYYGLGAGDQPGPNDKKSELLPVEWNSNKDLYVLRYESKDGSRKLLVKAVTVENSMIINVLEHGSQQVSDLTLNLNDYIDSEHLVDFHRVYKNSEELRSRIVSGIITPIHEQWEKANLSPHREFPPATAREVDPLRIHPQHPHTSRQPTWCDPLGPFAVGGEDLDPFGCRRGGMIVDPLRSGFPRALIDPSSGLPNRLPPGAVPPGARFDPFGPIGTSPSGPNPDHLPPPGYDDMYL.

Position 2 is an N-acetylalanine (Ala2). The important for homodimerization and interaction with FBXO7 stretch occupies residues Ala2–Asn150. At Ser152 the chain carries Phosphoserine. The residue at position 204 (Arg204) is an Omega-N-methylarginine. The residue at position 218 (Arg218) is an Asymmetric dimethylarginine. Residues Leu220–Leu270 are disordered. Omega-N-methylarginine is present on Arg230. Ser251 is modified (phosphoserine). Residues Gly254–Gly264 show a composition bias toward pro residues.

The protein belongs to the proteasome inhibitor PI31 family. In terms of assembly, monomer and homodimer. Interacts with FBXO7.

It is found in the cytoplasm. Its subcellular location is the endoplasmic reticulum. Its function is as follows. Plays an important role in control of proteasome function. Inhibits the hydrolysis of protein and peptide substrates by the 20S proteasome. Also inhibits the activation of the proteasome by the proteasome regulatory proteins PA700 and PA28. The protein is Proteasome inhibitor PI31 subunit (PSMF1) of Bos taurus (Bovine).